Consider the following 107-residue polypeptide: Nucleoid-associated protein AZOSEA06390 (107 aa).

This sequence belongs to the YbaB/EbfC family. In terms of assembly, homodimer.

It localises to the cytoplasm. Its subcellular location is the nucleoid. In terms of biological role, binds to DNA and alters its conformation. May be involved in regulation of gene expression, nucleoid organization and DNA protection. The polypeptide is Nucleoid-associated protein AZOSEA06390 (Aromatoleum aromaticum (strain DSM 19018 / LMG 30748 / EbN1) (Azoarcus sp. (strain EbN1))).